A 512-amino-acid chain; its full sequence is Neuronal acetylcholine receptor subunit alpha-2 (512 aa).

A signal peptide spans 1–27; the sequence is MAPSHPAFQFWIHLYLWCLLLMPAVLA. Topologically, residues 28–241 are extracellular; the sequence is QQGSHTHAED…VTYYFVIRRL (214 aa). N-linked (GlcNAc...) asparagine glycosylation is found at asparagine 56 and asparagine 106. An intrachain disulfide couples cysteine 160 to cysteine 174. An N-linked (GlcNAc...) asparagine glycan is attached at asparagine 212. Cysteine 224 and cysteine 225 are disulfide-bonded. Helical transmembrane passes span 242–266, 274–292, and 308–329; these read PLFYTINLIIPCLLISCLTVLVFYL, ITLCISVLLSLTVFLLLIT, and YLLFTMIFVTLSIVITVFVLNV. Residues 330 to 485 are Cytoplasmic-facing; the sequence is HHRSPSTHNM…WKYVAMVVDR (156 aa). A helical transmembrane segment spans residues 486 to 504; sequence IFLWLFIIVCFLGTIGLFL.

It belongs to the ligand-gated ion channel (TC 1.A.9) family. Acetylcholine receptor (TC 1.A.9.1) subfamily. Alpha-2/CHRNA2 sub-subfamily. Neuronal AChR is composed of two different types of subunits: alpha and non-alpha (beta). CHRNA2/alpha-2 subunit can be combined to CHRNB2/beta-2 or CHRNB4/beta-4 to give rise to functional receptors. Both CHRNA2:CHRNB2 and CHRNA2:CHRNB4 nAChR complexes are heteropentamers with two subtypes: LS (low agonist sensitivity) with a (CHRNA2)3:(CHRNB2/4)2 and HS (high agonist sensitivity) with a (CHRNA2)2:(CHRNB2/4)3 stoichiometries; the subtypes differ in their subunit binding interfaces which are involved in ligand binding.

It localises to the synaptic cell membrane. Its subcellular location is the cell membrane. It catalyses the reaction Ca(2+)(in) = Ca(2+)(out). It carries out the reaction K(+)(in) = K(+)(out). The enzyme catalyses Na(+)(in) = Na(+)(out). Component of neuronal acetylcholine receptors (nAChRs) that function as pentameric, ligand-gated cation channels with high calcium permeability among other activities. nAChRs are excitatory neurotrasnmitter receptors formed by a collection of nAChR subunits known to mediate synaptic transmission in the nervous system and the neuromuscular junction. Each nAchR subunit confers differential attributes to channel properties, including activation, deactivation and desensitization kinetics, pH sensitivity, cation permeability, and binding to allosteric modulators. CHRNA2 forms heteropentameric neuronal acetylcholine receptors with CHRNB2 and CHRNB4 and plays a role in nicotine dependence. The sequence is that of Neuronal acetylcholine receptor subunit alpha-2 (Chrna2) from Mus musculus (Mouse).